We begin with the raw amino-acid sequence, 176 residues long: MFHVSFRYIFGIPPLILVLLPVASSDCDIEGKDGGVYQNVLMVSIDDLDRMIDFDSNCLNNEPNFLKKHSCDDNKEASFLYRAARKLKQFIKMNISEEFNHHLSTVSQGTLTLFNCTSKVKGRKPPSLGEAQLTKNLEENKSLKEQKRQGDLCFLKILLQKIKTCWNKILRGAKEY.

The first 25 residues, 1–25 (MFHVSFRYIFGIPPLILVLLPVASS), serve as a signal peptide directing secretion. Intrachain disulfides connect Cys-27/Cys-165, Cys-58/Cys-153, and Cys-71/Cys-116. Residues Asn-94, Asn-115, and Asn-140 are each glycosylated (N-linked (GlcNAc...) asparagine).

It belongs to the IL-7/IL-9 family.

The protein resides in the secreted. Its function is as follows. Hematopoietic growth factor capable of stimulating the proliferation of lymphoid progenitors. It is important for proliferation during certain stages of B-cell maturation. This chain is Interleukin-7 (IL7), found in Sus scrofa (Pig).